We begin with the raw amino-acid sequence, 39 residues long: Bacteriocin E50-52 (39 aa).

It is found in the secreted. Bacteriocin active against the Gram-negative bacteria C.jejuni, Y.enterocolitica and Y.pseudotuberculosis, and the Gram-positive bacteria S.aureus, S.epidermidis, L.monocytogenes and Listeria spp. When added to the drinking water of chickens, causes a decrease in the levels of C.jejuni and S.enteritidis in the ceca, and in the levels of S.enteritidis in the liver and spleen. This chain is Bacteriocin E50-52, found in Enterococcus faecium (Streptococcus faecium).